Reading from the N-terminus, the 204-residue chain is Large ribosomal subunit protein eL15 (204 aa).

This sequence belongs to the eukaryotic ribosomal protein eL15 family. In terms of assembly, component of the large ribosomal subunit.

It localises to the cytoplasm. Component of the large ribosomal subunit. The ribosome is a large ribonucleoprotein complex responsible for the synthesis of proteins in the cell. This chain is Large ribosomal subunit protein eL15 (rpl15), found in Mylopharyngodon piceus (Black carp).